The chain runs to 262 residues: uncharacterized protein (262 aa).

Disordered stretches follow at residues 1 to 30 (MGKK…KKEK) and 232 to 262 (EEEE…DMEE). Acidic residues-rich tracts occupy residues 9–21 (NEDG…ETES), 232–245 (EEEE…EETD), and 253–262 (EEDEDEDMEE).

This is an uncharacterized protein from Caenorhabditis elegans.